The sequence spans 453 residues: Aryl hydrocarbon receptor nuclear translocator homolog (453 aa).

In terms of domain architecture, bHLH spans 44-97 (FARENHSEIERRRRNKMTHYINELAEMVPQCASLGRKPDKLTILRMAVSHMKGI). 2 PAS domains span residues 115–193 (DQEL…LDLK) and 277–347 (ASMP…LSDQ). Positions 348–392 (PMRINIRVRTSTDYIPCTVSAYKFMNPYSEQFEYVVATHQIAPQE) constitute a PAC domain. Residues 410 to 453 (EFGELGGAPSAVDYGQSSSGGWRPEAQGAPQAQWQWDPMNGYNQ) form a disordered region.

In terms of assembly, interacts with hif-1. Heterodimer; efficient DNA binding requires dimerization with another bHLH protein. Forms a heterodimer with ahr-1; binds DNA as heterodimer. Forms a heterodimer with PAS domain-containing protein cky-1; binds DNA as heterodimer. Expressed in many cell types throughout development, including hypodermal cells, intestinal cells, pharyngeal cells, and neurons. Expressed in every cell during embryo.

It is found in the nucleus. Transcription factor. Efficient DNA binding requires dimerization with another bHLH protein, such as cky-1 or ahr-1. Regulates transcription of target genes, probably acting in complex with cky-1. Has a role in cellular differentiation. Required for pharyngeal development. In collaboration with ahr-1 it is involved in RMEL/R and SDQR neuron cell migration. Acts in the cellular response to hypoxia. Involved in aggregation behavior by regulating soluble guanylate cyclase gene expression in the URX neurons. This is Aryl hydrocarbon receptor nuclear translocator homolog from Caenorhabditis elegans.